Here is a 198-residue protein sequence, read N- to C-terminus: Holliday junction branch migration complex subunit RuvA (198 aa).

The tract at residues Met1 to Lys61 is domain I. The domain II stretch occupies residues Thr62–Lys139. The flexible linker stretch occupies residues Phe140 to Thr144. The domain III stretch occupies residues Thr144 to Thr198.

Belongs to the RuvA family. Homotetramer. Forms an RuvA(8)-RuvB(12)-Holliday junction (HJ) complex. HJ DNA is sandwiched between 2 RuvA tetramers; dsDNA enters through RuvA and exits via RuvB. An RuvB hexamer assembles on each DNA strand where it exits the tetramer. Each RuvB hexamer is contacted by two RuvA subunits (via domain III) on 2 adjacent RuvB subunits; this complex drives branch migration. In the full resolvosome a probable DNA-RuvA(4)-RuvB(12)-RuvC(2) complex forms which resolves the HJ.

The protein localises to the cytoplasm. The RuvA-RuvB-RuvC complex processes Holliday junction (HJ) DNA during genetic recombination and DNA repair, while the RuvA-RuvB complex plays an important role in the rescue of blocked DNA replication forks via replication fork reversal (RFR). RuvA specifically binds to HJ cruciform DNA, conferring on it an open structure. The RuvB hexamer acts as an ATP-dependent pump, pulling dsDNA into and through the RuvAB complex. HJ branch migration allows RuvC to scan DNA until it finds its consensus sequence, where it cleaves and resolves the cruciform DNA. This chain is Holliday junction branch migration complex subunit RuvA, found in Mycoplasmopsis synoviae (strain 53) (Mycoplasma synoviae).